The chain runs to 58 residues: Cecropin-B (58 aa).

An N-terminal signal peptide occupies residues 1–21 (ILSFVFACLLALSAVSAAPEP).

Belongs to the cecropin family.

Its subcellular location is the secreted. In terms of biological role, cecropins have lytic and antibacterial activity against several Gram-positive and Gram-negative bacteria. The polypeptide is Cecropin-B (CECB) (Spodoptera litura (Asian cotton leafworm)).